The following is a 426-amino-acid chain: 3-phosphoshikimate 1-carboxyvinyltransferase (426 aa).

3-phosphoshikimate-binding residues include K21, S22, and R26. K21 contributes to the phosphoenolpyruvate binding site. The phosphoenolpyruvate site is built by G91 and R119. Residues S162, S163, Q164, S190, D304, and K331 each coordinate 3-phosphoshikimate. Phosphoenolpyruvate is bound at residue Q164. D304 (proton acceptor) is an active-site residue. R335, R377, and K403 together coordinate phosphoenolpyruvate.

It belongs to the EPSP synthase family. As to quaternary structure, monomer.

The protein localises to the cytoplasm. It catalyses the reaction 3-phosphoshikimate + phosphoenolpyruvate = 5-O-(1-carboxyvinyl)-3-phosphoshikimate + phosphate. It functions in the pathway metabolic intermediate biosynthesis; chorismate biosynthesis; chorismate from D-erythrose 4-phosphate and phosphoenolpyruvate: step 6/7. Functionally, catalyzes the transfer of the enolpyruvyl moiety of phosphoenolpyruvate (PEP) to the 5-hydroxyl of shikimate-3-phosphate (S3P) to produce enolpyruvyl shikimate-3-phosphate and inorganic phosphate. This chain is 3-phosphoshikimate 1-carboxyvinyltransferase, found in Clostridium kluyveri (strain ATCC 8527 / DSM 555 / NBRC 12016 / NCIMB 10680 / K1).